Here is a 187-residue protein sequence, read N- to C-terminus: Chromophore lyase CpcS/CpeS 2 (187 aa).

The protein belongs to the CpcS/CpeS biliprotein lyase family.

Functionally, covalently attaches a chromophore to Cys residue(s) of phycobiliproteins. The polypeptide is Chromophore lyase CpcS/CpeS 2 (Synechococcus sp. (strain JA-3-3Ab) (Cyanobacteria bacterium Yellowstone A-Prime)).